Consider the following 437-residue polypeptide: MTEKIYDAIVVGAGFSGLVAARELSAQGRSVLIIEARHRLGGRTHVVNFLGRPVEIGGAGVHWCQPHVFAEMQRYGFGFKEAPLADLDKAYMVFADGQKIDVPPATFDEEYTTAFEKFCSRSRELFPRPYSPLDNHEVSNLDGVSARDHLESLGLNELQLASMNAELTLYGGAPTTELSYPSFVKFHALASWDTITFTDSEKRYHVQGGTNALCQAIFDDCRADSEFGVPVEAVAQTDNGVTVTLADKRVFRALTCVLTLPTKVYADVRFEPPLPPEKRAFIEHAEMADGAELYVHVRQNLGNTFTFCDDPNPFNAVQTYAYDDELGTILKITIGRQSLINLENFDAIAAEIRKIHGDVEVLEALPYNWAMDEYARTSYPAMRKGWFSRYKDMAKPENRLFFAGSATADGWHEYIDGAIESGIRVGREIRHFMKATA.

FAD contacts are provided by residues serine 16, 35 to 37 (EAR), arginine 43, 57 to 60 (GGAG), valine 231, serine 405, and 413 to 415 (EYI).

This sequence belongs to the flavin monoamine oxidase family. Homodimer. FAD is required as a cofactor.

The catalysed reaction is (S)-6-hydroxynicotine + O2 + H2O = 6-hydroxypseudooxynicotine + H2O2. It catalyses the reaction (S)-6-hydroxynicotine + O2 = 6-hydroxy-N-methylmyosmine + H2O2. It functions in the pathway alkaloid degradation; nicotine degradation; 6-hydroxypseudooxynicotine from nicotine (S-isomer route): step 2/2. With respect to regulation, partially inhibited by Co(2+) or Zn(2+) and significantly inhibited by Ag(+), Cu(2+) and Hg(2+). Functionally, involved in the degradation of L-nicotine. Catalyzes the oxidation of (S)-6-hydroxynicotine (6-hydroxy-L-nicotine) to 6-hydroxypseudooxynicotine. Oxidation of the pyrrolidine ring of (S)-6-hydroxynicotine leads to the formation of the optically inactive 6-hydroxy-N-methylmyosmine, which hydrolyzes spontaneously to 6-hydroxypseudooxynicotine. Acts with absolute stereospecificity on the L-form of 6-hydroxynicotine. Also involved in the degradation of nornicotine, and catalyzes the oxidation of 6-hydroxynornicotine to 6-hydroxymyosmine, which hydrolyzes to 6-hydroxypseudooxynornicotine. In vitro, converts (S)-nicotine into N-methylmyosmine, which spontaneously hydrolyzes spontaneously into pseudooxynicotine, but catalytic efficiency is about 1900-fold higher with (S)-6-hydroxynicotine. The sequence is that of (S)-6-hydroxynicotine oxidase from Shinella sp. (strain HZN7).